The following is a 360-amino-acid chain: POU domain, class 5, transcription factor 1 (360 aa).

2 disordered regions span residues 1–50 (MAGH…IGPG) and 87–118 (QGGLETPQPEGEAGAGVESNSEGASPEPCAAP). Residues 4-12 (HLASDFAFS) carry the 9aaTAD motif. The segment covering 41–50 (PPGGSGIGPG) has biased composition (gly residues). The residue at position 111 (serine 111) is a Phosphoserine; by MAPK. A Glycyl lysine isopeptide (Lys-Gly) (interchain with G-Cter in SUMO) cross-link involves residue lysine 123. The POU-specific domain maps to 138-212 (DIKALQKDLE…LLQKWVEEAD (75 aa)). Residues arginine 157 and glutamine 164 each contribute to the DNA site. 2 DNA-binding regions span residues 180 to 186 (SQTTICR) and 193 to 196 (SFKN). The homeobox DNA-binding region spans 230–289 (RKRKRTSIENRVRGNLESMFLQCPKPTLQQISHIAQQLGLEKDVVRVWFCNRRQKGKRSS). Residue threonine 235 is modified to Phosphothreonine. Phosphoserine occurs at positions 236, 289, and 290. The disordered stretch occupies residues 287–316 (RSSSDYSQREDFEAAGSPFPGGPVSFPLAP). A compositionally biased stretch (low complexity) spans 302 to 313 (GSPFPGGPVSFP). Position 355 is a phosphoserine (serine 355).

Belongs to the POU transcription factor family. Class-5 subfamily. Interacts with PKM. Interacts with WWP2. Interacts with UBE2I and ZSCAN10. Interacts with PCGF1. Interacts with ESRRB; recruits ESRRB near the POU5F1-SOX2 element in the NANOG proximal promoter; the interaction is DNA independent. Interacts with ZNF322. Interacts with MAPK8 and MAPK9; the interaction allows MAPK8 and MAPK9 to phosphorylate POU5F1 on Ser-355. Interacts (when phosphorylated on Ser-355) with FBXW8. Interacts with FBXW4. Interacts with SOX2 and SOX15; binds synergistically with either SOX2 or SOX15 to DNA. Interacts with DDX56. Sumoylation enhances the protein stability, DNA binding and transactivation activity. Sumoylation is required for enhanced YES1 expression. Post-translationally, ubiquitinated; undergoes 'Lys-63'-linked polyubiquitination by WWP2 leading to proteasomal degradation. In terms of processing, ERK1/2-mediated phosphorylation at Ser-111 promotes nuclear exclusion and proteasomal degradation. Phosphorylation at Thr-235 and Ser-236 decrease DNA-binding and alters ability to activate transcription.

The protein localises to the cytoplasm. Its subcellular location is the nucleus. In terms of biological role, transcription factor that binds to the octamer motif (5'-ATTTGCAT-3'). Forms a trimeric complex with SOX2 or SOX15 on DNA and controls the expression of a number of genes involved in embryonic development such as YES1, FGF4, UTF1 and ZFP206. Critical for early embryogenesis and for embryonic stem cell pluripotency. The sequence is that of POU domain, class 5, transcription factor 1 (POU5F1) from Sus scrofa (Pig).